The primary structure comprises 271 residues: Urease accessory protein UreD (271 aa).

Belongs to the UreD family. In terms of assembly, ureD, UreF and UreG form a complex that acts as a GTP-hydrolysis-dependent molecular chaperone, activating the urease apoprotein by helping to assemble the nickel containing metallocenter of UreC. The UreE protein probably delivers the nickel.

The protein localises to the cytoplasm. Required for maturation of urease via the functional incorporation of the urease nickel metallocenter. The polypeptide is Urease accessory protein UreD (Mycolicibacterium smegmatis (strain ATCC 700084 / mc(2)155) (Mycobacterium smegmatis)).